A 179-amino-acid chain; its full sequence is Large ribosomal subunit protein uL5 (179 aa).

The protein belongs to the universal ribosomal protein uL5 family. Part of the 50S ribosomal subunit; part of the 5S rRNA/L5/L18/L25 subcomplex. Contacts the 5S rRNA and the P site tRNA. Forms a bridge to the 30S subunit in the 70S ribosome.

This is one of the proteins that bind and probably mediate the attachment of the 5S RNA into the large ribosomal subunit, where it forms part of the central protuberance. In the 70S ribosome it contacts protein S13 of the 30S subunit (bridge B1b), connecting the 2 subunits; this bridge is implicated in subunit movement. Contacts the P site tRNA; the 5S rRNA and some of its associated proteins might help stabilize positioning of ribosome-bound tRNAs. This is Large ribosomal subunit protein uL5 from Prochlorococcus marinus (strain AS9601).